Reading from the N-terminus, the 258-residue chain is Phosphate import ATP-binding protein PstB (258 aa).

An ABC transporter domain is found at Leu5–Lys247. Residue Gly37–Ser44 participates in ATP binding.

This sequence belongs to the ABC transporter superfamily. Phosphate importer (TC 3.A.1.7) family. In terms of assembly, the complex is composed of two ATP-binding proteins (PstB), two transmembrane proteins (PstC and PstA) and a solute-binding protein (PstS).

It localises to the cell membrane. The enzyme catalyses phosphate(out) + ATP + H2O = ADP + 2 phosphate(in) + H(+). In terms of biological role, part of the ABC transporter complex PstSACB involved in phosphate import. Responsible for energy coupling to the transport system. The sequence is that of Phosphate import ATP-binding protein PstB from Mycolicibacterium smegmatis (Mycobacterium smegmatis).